The sequence spans 868 residues: Receptor-like protein kinase At5g59670 (868 aa).

The first 22 residues, Met-1–Ala-22, serve as a signal peptide directing secretion. The Extracellular segment spans residues Gln-23–Glu-500. 12 N-linked (GlcNAc...) asparagine glycosylation sites follow: Asn-38, Asn-94, Asn-141, Asn-287, Asn-300, Asn-372, Asn-405, Asn-416, Asn-423, Asn-445, Asn-464, and Asn-471. LRR repeat units follow at residues Pro-409 to Ser-432, Ile-433 to Ser-459, and Ser-461 to Lys-481. Residues Phe-501–Val-521 traverse the membrane as a helical segment. Topologically, residues Phe-522–Arg-868 are cytoplasmic. The residue at position 555 (Thr-555) is a Phosphothreonine. Residues Lys-564–Lys-834 enclose the Protein kinase domain. Residues Leu-570–Val-578 and Lys-592 each bind ATP. A Phosphotyrosine modification is found at Tyr-637. The active-site Proton acceptor is Asp-689. A Phosphoserine modification is found at Ser-723. A phosphothreonine mark is found at Thr-724 and Thr-729.

This sequence belongs to the protein kinase superfamily. Ser/Thr protein kinase family. In terms of processing, autophosphorylated on Tyr and Thr residues.

It is found in the cell membrane. The enzyme catalyses L-seryl-[protein] + ATP = O-phospho-L-seryl-[protein] + ADP + H(+). It catalyses the reaction L-threonyl-[protein] + ATP = O-phospho-L-threonyl-[protein] + ADP + H(+). It carries out the reaction L-tyrosyl-[protein] + ATP = O-phospho-L-tyrosyl-[protein] + ADP + H(+). Its function is as follows. Probable receptor with a dual specificity kinase activity acting on both serine/threonine- and tyrosine-containing substrates. The polypeptide is Receptor-like protein kinase At5g59670 (Arabidopsis thaliana (Mouse-ear cress)).